We begin with the raw amino-acid sequence, 146 residues long: Sperm surface protein Sp17 (146 aa).

Positions 76-88 (EHESEKCEAEEKS) are enriched in basic and acidic residues. The segment at 76 to 109 (EHESEKCEAEEKSQSVTEEETPVLTIDSEDDKDK) is disordered. The segment covering 92–108 (TEEETPVLTIDSEDDKD) has biased composition (acidic residues). Residues 110-139 (EEMAALKIQAAFRGHLAREDVKKIRTNKAE) form the IQ domain.

Homodimer. May interact with ROPN1. The N-terminus is blocked. In terms of tissue distribution, testis- and sperm-specific.

It is found in the membrane. Its function is as follows. Sperm surface zona pellucida binding protein. Helps to bind spermatozoa to the zona pellucida with high affinity. Might function in binding zona pellucida and carbohydrates. The protein is Sperm surface protein Sp17 (SPA17) of Oryctolagus cuniculus (Rabbit).